The following is a 186-amino-acid chain: uncharacterized protein (186 aa).

Residues 89–164 enclose the Cupin type-2 domain; it reads LMSLGIGEDI…NTPLKLYSIY (76 aa). ATP is bound at residue 117-124; sequence GIVKMGKS.

This is an uncharacterized protein from Bacillus subtilis (strain 168).